The chain runs to 906 residues: Interference hedgehog (906 aa).

An N-terminal signal peptide occupies residues 1-20 (MSPLTSSLLLFSLLTSSLEA). Residues 21-715 (IPVLQPSFPP…SHNETVSMSP (695 aa)) lie on the Extracellular side of the membrane. 4 Ig-like C2-type domains span residues 39–144 (PGVR…TARL), 134–236 (PLVV…ISSS), 252–341 (PHLL…INVT), and 346–433 (PRIT…LQVN). Cys-62 and Cys-128 are oxidised to a cystine. Asn-85, Asn-104, Asn-148, and Asn-209 each carry an N-linked (GlcNAc...) asparagine glycan. Cystine bridges form between Cys-173/Cys-220 and Cys-276/Cys-324. N-linked (GlcNAc...) asparagine glycosylation is found at Asn-339 and Asn-388. An intrachain disulfide couples Cys-367 to Cys-415. Residues 427–439 (GTLLQVNPKQIQS) are compositionally biased toward polar residues. A disordered region spans residues 427 to 476 (GTLLQVNPKQIQSEPRETGSGGGFGSHRSMKPVNHGQKPTKMIPPSPPNV). 2 Fibronectin type-III domains span residues 470–578 (PPSP…LQPG) and 586–681 (VPEL…TQRP). A glycan (N-linked (GlcNAc...) asparagine) is linked at Asn-475. Heparin is bound by residues Arg-506, Lys-512, Lys-514, and Arg-552. Asn-568 is a glycosylation site (N-linked (GlcNAc...) asparagine). Positions 673–713 (LKQGRTQRPRASTTEEPTIQGIGDRDTTSHNQPSHNETVSM) are disordered. Composition is skewed to polar residues over residues 676-689 (GRTQ…TEEP) and 701-713 (SHNQ…TVSM). A helical transmembrane segment spans residues 716–736 (MLTGTIGGGALLLILLVSAFL). Over 737 to 906 (CMCRRRSPRG…SSGSLNSVGV (170 aa)) the chain is Cytoplasmic. A disordered region spans residues 789–906 (AQQQQQQLDE…SSGSLNSVGV (118 aa)). Composition is skewed to low complexity over residues 854–866 (GNNN…SEAG) and 890–906 (SSRS…SVGV).

It belongs to the immunoglobulin superfamily. IHOG family. As to quaternary structure, homodimer. Heterotetramer; 2 iHog chains bind 2 hh chains when facilitated by heparin, heparin is required to promote high-affinity interactions between hh and iHog.

It localises to the membrane. Mediates response to the active Hedgehog (Hh) protein signal in embryos, functioning upstream or at the level of patched (ptc). The polypeptide is Interference hedgehog (Drosophila persimilis (Fruit fly)).